Here is a 350-residue protein sequence, read N- to C-terminus: Variable large protein 4 (350 aa).

The N-terminal stretch at 1 to 18 (MRRRISAIIMTLFMVLVS) is a signal peptide. Residue Cys19 is the site of N-palmitoyl cysteine attachment. A lipid anchor (S-diacylglycerol cysteine) is attached at Cys19.

Belongs to the variable large protein (Vlp) family. Delta subfamily.

It is found in the cell outer membrane. In terms of biological role, the Vlp and Vsp proteins are antigenically distinct proteins, only one vlp or vsp gene is transcriptionally active at any one time. Switching between these genes is a mechanism of host immune response evasion. The polypeptide is Variable large protein 4 (Borrelia hermsii).